The primary structure comprises 66 residues: Large ribosomal subunit protein bL31 (66 aa).

The Zn(2+) site is built by cysteine 16, cysteine 18, cysteine 36, and cysteine 39.

This sequence belongs to the bacterial ribosomal protein bL31 family. Type A subfamily. As to quaternary structure, part of the 50S ribosomal subunit. Zn(2+) is required as a cofactor.

Its function is as follows. Binds the 23S rRNA. In Geobacillus kaustophilus (strain HTA426), this protein is Large ribosomal subunit protein bL31.